The following is a 930-amino-acid chain: Translation initiation factor IF-2 (930 aa).

Positions 50–67 are enriched in low complexity; that stretch reads FKPAAAPKVEAKPAAPKV. 2 disordered regions span residues 50–195 and 260–346; these read FKPA…PRID and EVVP…HELP. Basic and acidic residues-rich tracts occupy residues 68–90 and 110–125; these read SAEK…EAKP and FKAE…AERR. The segment covering 129-141 has biased composition (low complexity); it reads KGNNRDQQQNGNR. Basic and acidic residues-rich tracts occupy residues 157–167 and 262–295; these read RDNRRFNDQAK and VPEK…DGPR. Positions 309–318 are enriched in low complexity; it reads NQKNSNWNNN. Residues 337–346 are compositionally biased toward basic and acidic residues; it reads VTERKFHELP. A tr-type G domain is found at 432 to 599; that stretch reads ERPPVVTIMG…TVLLVAEIQE (168 aa). A G1 region spans residues 441 to 448; it reads GHVDHGKT. 441 to 448 contacts GTP; it reads GHVDHGKT. Residues 466 to 470 form a G2 region; that stretch reads GITQH. The G3 stretch occupies residues 487-490; the sequence is DTPG. GTP contacts are provided by residues 487-491 and 541-544; these read DTPGH and NKID. The tract at residues 541–544 is G4; the sequence is NKID. The interval 577–579 is G5; the sequence is SAK.

The protein belongs to the TRAFAC class translation factor GTPase superfamily. Classic translation factor GTPase family. IF-2 subfamily.

The protein resides in the cytoplasm. Its function is as follows. One of the essential components for the initiation of protein synthesis. Protects formylmethionyl-tRNA from spontaneous hydrolysis and promotes its binding to the 30S ribosomal subunits. Also involved in the hydrolysis of GTP during the formation of the 70S ribosomal complex. In Streptococcus pneumoniae (strain Hungary19A-6), this protein is Translation initiation factor IF-2.